A 420-amino-acid chain; its full sequence is Histidine--tRNA ligase (420 aa).

This sequence belongs to the class-II aminoacyl-tRNA synthetase family. As to quaternary structure, homodimer.

It localises to the cytoplasm. The catalysed reaction is tRNA(His) + L-histidine + ATP = L-histidyl-tRNA(His) + AMP + diphosphate + H(+). This chain is Histidine--tRNA ligase, found in Thermodesulfovibrio yellowstonii (strain ATCC 51303 / DSM 11347 / YP87).